The primary structure comprises 194 residues: Thymidylate kinase (194 aa).

7 to 14 (GVDCVGKS) serves as a coordination point for ATP.

Belongs to the thymidylate kinase family.

It carries out the reaction dTMP + ATP = dTDP + ADP. In terms of biological role, phosphorylation of dTMP to form dTDP in both de novo and salvage pathways of dTTP synthesis. The chain is Thymidylate kinase from Campylobacter lari (strain RM2100 / D67 / ATCC BAA-1060).